A 274-amino-acid chain; its full sequence is Nitrogenase iron protein (274 aa).

8 to 15 (GKGGIGKS) serves as a coordination point for ATP. Cysteine 94 is a [4Fe-4S] cluster binding site. An ADP-ribosylarginine; by dinitrogenase reductase ADP-ribosyltransferase modification is found at arginine 97. Cysteine 131 is a [4Fe-4S] cluster binding site.

It belongs to the NifH/BchL/ChlL family. Homodimer. It depends on [4Fe-4S] cluster as a cofactor. In terms of processing, the reversible ADP-ribosylation of Arg-97 inactivates the nitrogenase reductase and regulates nitrogenase activity.

The catalysed reaction is N2 + 8 reduced [2Fe-2S]-[ferredoxin] + 16 ATP + 16 H2O = H2 + 8 oxidized [2Fe-2S]-[ferredoxin] + 2 NH4(+) + 16 ADP + 16 phosphate + 6 H(+). The key enzymatic reactions in nitrogen fixation are catalyzed by the nitrogenase complex, which has 2 components: the iron protein and the molybdenum-iron protein. This is Nitrogenase iron protein from Chlorobium chlorochromatii (strain CaD3).